Here is a 142-residue protein sequence, read N- to C-terminus: Large ribosomal subunit protein uL11 (142 aa).

It belongs to the universal ribosomal protein uL11 family. Part of the ribosomal stalk of the 50S ribosomal subunit. Interacts with L10 and the large rRNA to form the base of the stalk. L10 forms an elongated spine to which L12 dimers bind in a sequential fashion forming a multimeric L10(L12)X complex. One or more lysine residues are methylated.

Its function is as follows. Forms part of the ribosomal stalk which helps the ribosome interact with GTP-bound translation factors. This chain is Large ribosomal subunit protein uL11, found in Klebsiella pneumoniae subsp. pneumoniae (strain ATCC 700721 / MGH 78578).